The sequence spans 454 residues: Photosystem II CP47 reaction center protein (454 aa).

Helical transmembrane passes span 6-26 (MFVL…GWTI), 47-61 (IILS…IWHW), 86-102 (GIHL…FGAF), 149-164 (IAAG…FHLS), 183-198 (VLSS…AFVV), and 403-418 (SFAL…HGAR).

The protein belongs to the PsbB/PsbC family. PsbB subfamily. In terms of assembly, PSII is composed of 1 copy each of membrane proteins PsbA, PsbB, PsbC, PsbD, PsbE, PsbF, PsbH, PsbI, PsbJ, PsbK, PsbL, PsbM, PsbT, PsbX, PsbY, PsbZ, Psb30/Ycf12, at least 3 peripheral proteins of the oxygen-evolving complex and a large number of cofactors. It forms dimeric complexes. Requires Binds multiple chlorophylls. PSII binds additional chlorophylls, carotenoids and specific lipids. as cofactor.

The protein resides in the plastid. The protein localises to the chloroplast thylakoid membrane. Its function is as follows. One of the components of the core complex of photosystem II (PSII). It binds chlorophyll and helps catalyze the primary light-induced photochemical processes of PSII. PSII is a light-driven water:plastoquinone oxidoreductase, using light energy to abstract electrons from H(2)O, generating O(2) and a proton gradient subsequently used for ATP formation. In Ostreococcus tauri, this protein is Photosystem II CP47 reaction center protein.